Consider the following 180-residue polypeptide: MGILIPAWVDDRLVPVDKLEAHEKGLKHKAVSVFAVRDMDILIQRRALGKYHTPGLWANTCCTHPDWDESASTCAVRRLREELGITGLYPEYRHRLEYHADVGNGMVENEVVDVFLAHVRGPLQVVPNPDEVMEIRWIGYHDLLAEVQRYPERFTPWLKIYLHHHADTIFGPDLIISAKA.

Mn(2+) is bound by residues histidine 22 and histidine 28. The region spanning leucine 26–isoleucine 160 is the Nudix hydrolase domain. Cysteine 62 is an active-site residue. Cysteine 62 contributes to the Mg(2+) binding site. Histidine 64 serves as a coordination point for Mn(2+). Glutamate 82 provides a ligand contact to Mg(2+). Mn(2+) contacts are provided by glutamate 108 and glutamate 110. Glutamate 110 is an active-site residue.

Belongs to the IPP isomerase type 1 family. Requires Mg(2+) as cofactor. Mn(2+) serves as cofactor.

The protein resides in the cytoplasm. The catalysed reaction is isopentenyl diphosphate = dimethylallyl diphosphate. It participates in isoprenoid biosynthesis; dimethylallyl diphosphate biosynthesis; dimethylallyl diphosphate from isopentenyl diphosphate: step 1/1. Catalyzes the 1,3-allylic rearrangement of the homoallylic substrate isopentenyl (IPP) to its highly electrophilic allylic isomer, dimethylallyl diphosphate (DMAPP). The sequence is that of Isopentenyl-diphosphate Delta-isomerase from Ruegeria pomeroyi (strain ATCC 700808 / DSM 15171 / DSS-3) (Silicibacter pomeroyi).